Here is a 622-residue protein sequence, read N- to C-terminus: Probable potassium transport system protein Kup (622 aa).

12 helical membrane passes run 8–28, 50–70, 103–123, 137–157, 168–188, 203–223, 247–267, 285–305, 337–357, 366–386, 393–413, and 419–439; these read LAAL…TSVL, ILSI…VVLV, LAVG…TPAI, PHFK…LFAV, FFGP…LAHI, ALGF…AVVL, WFGV…ALLL, ALIP…QALI, IYMP…VVMF, AYGI…FFVI, PLAL…AFFA, and LFQG…LMMT.

It belongs to the HAK/KUP transporter (TC 2.A.72) family.

It localises to the cell inner membrane. It catalyses the reaction K(+)(in) + H(+)(in) = K(+)(out) + H(+)(out). In terms of biological role, transport of potassium into the cell. Likely operates as a K(+):H(+) symporter. The protein is Probable potassium transport system protein Kup of Verminephrobacter eiseniae (strain EF01-2).